The primary structure comprises 39 residues: Potassium channel toxin alpha-KTx 2.24 (39 aa).

3 disulfides stabilise this stretch: C7-C29, C13-C34, and C17-C36.

Belongs to the short scorpion toxin superfamily. Potassium channel inhibitor family. Alpha-KTx 02 subfamily. As to expression, expressed by the venom gland.

It is found in the secreted. Functionally, blocks human voltage-gated potassium (Kv) channels Kv1.1/KCNA, Kv1.2/KCNA2 and Kv1.3/KCNA3. Exhibits high affinity for Kv1.2/KCNA2 and selectivity over Kv1.1/KCNA and Kv1.3/KCNA3. In Centruroides bonito (Scorpion), this protein is Potassium channel toxin alpha-KTx 2.24.